The following is a 144-amino-acid chain: Cytochrome c oxidase subunit 4 isoform 1, mitochondrial (144 aa).

Topologically, residues Ser-1–Asn-73 are mitochondrial matrix. The residue at position 4 (Lys-4) is an N6-acetyllysine; alternate. Position 4 is an N6-succinyllysine; alternate (Lys-4). Phosphoserine is present on residues Ser-31 and Ser-33. At Lys-35 the chain carries N6-acetyllysine; alternate. Lys-35 bears the N6-succinyllysine; alternate mark. Lys-42 bears the N6-acetyllysine mark. The helical transmembrane segment at Glu-74 to Tyr-99 threads the bilayer. The Mitochondrial intermembrane segment spans residues Val-100–Lys-144.

It belongs to the cytochrome c oxidase IV family. Component of the cytochrome c oxidase (complex IV, CIV), a multisubunit enzyme composed of 14 subunits. The complex is composed of a catalytic core of 3 subunits MT-CO1, MT-CO2 and MT-CO3, encoded in the mitochondrial DNA, and 11 supernumerary subunits COX4I, COX5A, COX5B, COX6A, COX6B, COX6C, COX7A, COX7B, COX7C, COX8 and NDUFA4, which are encoded in the nuclear genome. The complex exists as a monomer or a dimer and forms supercomplexes (SCs) in the inner mitochondrial membrane with NADH-ubiquinone oxidoreductase (complex I, CI) and ubiquinol-cytochrome c oxidoreductase (cytochrome b-c1 complex, complex III, CIII), resulting in different assemblies (supercomplex SCI(1)III(2)IV(1) and megacomplex MCI(2)III(2)IV(2)). Interacts with PHB2; the interaction decreases in absence of SPHK2. Interacts with AFG1L. Interacts with ABCB7; this interaction allows the regulation of cellular iron homeostasis and cellular reactive oxygen species (ROS) levels in cardiomyocytes. Interacts with FLVCR2; this interaction occurs in the absence of heme and is disrupted upon heme binding. Interacts with IRGC.

The protein resides in the mitochondrion inner membrane. It participates in energy metabolism; oxidative phosphorylation. Its function is as follows. Component of the cytochrome c oxidase, the last enzyme in the mitochondrial electron transport chain which drives oxidative phosphorylation. The respiratory chain contains 3 multisubunit complexes succinate dehydrogenase (complex II, CII), ubiquinol-cytochrome c oxidoreductase (cytochrome b-c1 complex, complex III, CIII) and cytochrome c oxidase (complex IV, CIV), that cooperate to transfer electrons derived from NADH and succinate to molecular oxygen, creating an electrochemical gradient over the inner membrane that drives transmembrane transport and the ATP synthase. Cytochrome c oxidase is the component of the respiratory chain that catalyzes the reduction of oxygen to water. Electrons originating from reduced cytochrome c in the intermembrane space (IMS) are transferred via the dinuclear copper A center (CU(A)) of subunit 2 and heme A of subunit 1 to the active site in subunit 1, a binuclear center (BNC) formed by heme A3 and copper B (CU(B)). The BNC reduces molecular oxygen to 2 water molecules using 4 electrons from cytochrome c in the IMS and 4 protons from the mitochondrial matrix. The polypeptide is Cytochrome c oxidase subunit 4 isoform 1, mitochondrial (COX4I1) (Pithecia pithecia (White-faced saki)).